A 558-amino-acid polypeptide reads, in one-letter code: 2-isopropylmalate synthase (558 aa).

A Pyruvate carboxyltransferase domain is found at 30–303; that stretch reads PIWCSVDLRD…DPELDCRDIE (274 aa). Mg(2+)-binding residues include D39, H242, H244, and N278. A regulatory domain region spans residues 437 to 558; the sequence is QPNARIKFVD…ANRVLEERAK (122 aa).

It belongs to the alpha-IPM synthase/homocitrate synthase family. LeuA type 2 subfamily. In terms of assembly, homodimer. Mg(2+) serves as cofactor.

It localises to the cytoplasm. The enzyme catalyses 3-methyl-2-oxobutanoate + acetyl-CoA + H2O = (2S)-2-isopropylmalate + CoA + H(+). It participates in amino-acid biosynthesis; L-leucine biosynthesis; L-leucine from 3-methyl-2-oxobutanoate: step 1/4. In terms of biological role, catalyzes the condensation of the acetyl group of acetyl-CoA with 3-methyl-2-oxobutanoate (2-ketoisovalerate) to form 3-carboxy-3-hydroxy-4-methylpentanoate (2-isopropylmalate). This Agrobacterium fabrum (strain C58 / ATCC 33970) (Agrobacterium tumefaciens (strain C58)) protein is 2-isopropylmalate synthase.